The sequence spans 310 residues: Olfactory receptor 2A7 (310 aa).

Residues 1–24 (MGNNMTLITEFILLGFPLSPRMQM) lie on the Extracellular side of the membrane. Asn-4 carries an N-linked (GlcNAc...) asparagine glycan. Residues 25 to 45 (LLFALFSLFYAFTLLGNGTIV) form a helical membrane-spanning segment. Topologically, residues 46–53 (GLICLDSR) are cytoplasmic. A helical membrane pass occupies residues 54-74 (LHTPMYFFLSHLAIVDIAYAC). Over 75–96 (NTVPQMLVNLLDPVKPISYAGC) the chain is Extracellular. Cys-96 and Cys-178 are joined by a disulfide. The chain crosses the membrane as a helical span at residues 97-117 (MTQTFLFLTFAITECLLLVVM). Over 118–148 (SYDRYVAICHPLRYSAIMSWRVCSTMAVTSW) the chain is Cytoplasmic. A helical transmembrane segment spans residues 149–169 (IIGVLLSLIHLVLLLPLPFCV). Topologically, residues 170–204 (SQKVNHFFCEITAILKLACADTHLNETMVLAGAVS) are extracellular. The N-linked (GlcNAc...) asparagine glycan is linked to Asn-194. A helical transmembrane segment spans residues 205 to 225 (VLVGPFSSIVVSYACILGAIL). At 226 to 239 (KIQSEEGQRKAFST) the chain is on the cytoplasmic side. Residues 240 to 260 (CSSHLCVVGLFYGTAIVMYVG) traverse the membrane as a helical segment. The Extracellular portion of the chain corresponds to 261-273 (PRHGSPKEQKKYL). The helical transmembrane segment at 274–291 (LLFHSLFNPMLNPLIYSL) threads the bilayer. Residues 292–310 (RNSDVKNTLKRVLRTQRAL) lie on the Cytoplasmic side of the membrane.

The protein belongs to the G-protein coupled receptor 1 family. In terms of tissue distribution, olfactory epithelium.

It localises to the cell membrane. Functionally, odorant receptor. This Mus musculus (Mouse) protein is Olfactory receptor 2A7.